Reading from the N-terminus, the 498-residue chain is 3-octaprenyl-4-hydroxybenzoate carboxy-lyase (498 aa).

Asn177 lines the Mn(2+) pocket. Prenylated FMN-binding positions include 180–182 (IYR), 194–196 (RWL), and 199–200 (RG). Residue Glu243 coordinates Mn(2+). Asp292 functions as the Proton donor in the catalytic mechanism.

The protein belongs to the UbiD family. As to quaternary structure, homohexamer. It depends on prenylated FMN as a cofactor. Requires Mn(2+) as cofactor.

Its subcellular location is the cell membrane. It carries out the reaction a 4-hydroxy-3-(all-trans-polyprenyl)benzoate + H(+) = a 2-(all-trans-polyprenyl)phenol + CO2. It participates in cofactor biosynthesis; ubiquinone biosynthesis. In terms of biological role, catalyzes the decarboxylation of 3-octaprenyl-4-hydroxy benzoate to 2-octaprenylphenol, an intermediate step in ubiquinone biosynthesis. This Methylococcus capsulatus (strain ATCC 33009 / NCIMB 11132 / Bath) protein is 3-octaprenyl-4-hydroxybenzoate carboxy-lyase.